A 271-amino-acid polypeptide reads, in one-letter code: Protein MGF 360-15R (271 aa).

This sequence belongs to the asfivirus MGF 360 family.

Functionally, plays a role in virus cell tropism, and may be required for efficient virus replication in macrophages. This chain is Protein MGF 360-15R, found in African swine fever virus (isolate Tick/Malawi/Lil 20-1/1983) (ASFV).